A 137-amino-acid chain; its full sequence is NADH-quinone oxidoreductase subunit A 2 (137 aa).

Helical transmembrane passes span 12 to 32 (WGFA…LGVS), 66 to 86 (FYLV…LFAW), and 95 to 115 (WAGL…LVYL).

This sequence belongs to the complex I subunit 3 family. In terms of assembly, NDH-1 is composed of 13 different subunits. Subunits NuoA, H, J, K, L, M, N constitute the membrane sector of the complex.

It is found in the cell inner membrane. It carries out the reaction a quinone + NADH + 5 H(+)(in) = a quinol + NAD(+) + 4 H(+)(out). Functionally, NDH-1 shuttles electrons from NADH, via FMN and iron-sulfur (Fe-S) centers, to quinones in the respiratory chain. The immediate electron acceptor for the enzyme in this species is believed to be ubiquinone. Couples the redox reaction to proton translocation (for every two electrons transferred, four hydrogen ions are translocated across the cytoplasmic membrane), and thus conserves the redox energy in a proton gradient. The protein is NADH-quinone oxidoreductase subunit A 2 of Pseudomonas aeruginosa (strain ATCC 15692 / DSM 22644 / CIP 104116 / JCM 14847 / LMG 12228 / 1C / PRS 101 / PAO1).